We begin with the raw amino-acid sequence, 494 residues long: Glutamate--tRNA ligase (494 aa).

The short motif at 9–19 is the 'HIGH' region element; sequence PSPTGPLHIGS. Residues 249–253 carry the 'KMSKS' region motif; that stretch reads KLSKR. An ATP-binding site is contributed by lysine 252.

This sequence belongs to the class-I aminoacyl-tRNA synthetase family. Glutamate--tRNA ligase type 1 subfamily. In terms of assembly, monomer.

It localises to the cytoplasm. It carries out the reaction tRNA(Glu) + L-glutamate + ATP = L-glutamyl-tRNA(Glu) + AMP + diphosphate. Functionally, catalyzes the attachment of glutamate to tRNA(Glu) in a two-step reaction: glutamate is first activated by ATP to form Glu-AMP and then transferred to the acceptor end of tRNA(Glu). In Azobacteroides pseudotrichonymphae genomovar. CFP2, this protein is Glutamate--tRNA ligase.